The following is a 72-amino-acid chain: Large ribosomal subunit protein uL29 (72 aa).

Belongs to the universal ribosomal protein uL29 family.

In Chlamydia caviae (strain ATCC VR-813 / DSM 19441 / 03DC25 / GPIC) (Chlamydophila caviae), this protein is Large ribosomal subunit protein uL29.